Reading from the N-terminus, the 1057-residue chain is Desmoglein-1-alpha (1057 aa).

The signal sequence occupies residues 1–23 (MDWHSFRIAALLLTSLVVLEVNS). The propeptide occupies 24–49 (EFQIQVRDHNAKNGTIKWHSIRRQKR). 4 consecutive Cadherin domains span residues 50 to 157 (EWIK…PPVF), 158 to 269 (SMTT…IPYL), 270 to 389 (EQSS…RPGS), and 386 to 493 (RPGS…TGSE). At 50-564 (EWIKFAAACR…LYGDNVHFGP (515 aa)) the chain is on the extracellular side. N-linked (GlcNAc...) asparagine glycosylation is found at asparagine 110 and asparagine 180. The interval 490–552 (TGSESGGSSS…FQGDPDETLE (63 aa)) is disordered. The span at 510-525 (NGYQGTSSTENPQRVT) shows a compositional bias: polar residues. The chain crosses the membrane as a helical span at residues 565–585 (AGIGLLIMGFLVLGLVPFLLI). Topologically, residues 586–1057 (CCDCGGAPGG…TKYNTVQYSK (472 aa)) are cytoplasmic. 5 Desmoglein repeat repeats span residues 832 to 858 (AYHSGPGVQHPVPIPDPLGYGNVTVRE), 859 to 888 (SYTTSGTLKPSVHFHDNQQASNVVVTERVV), 889 to 918 (GPISGADLHGMLEIPDLRGGANVIVTERVI), 919 to 946 (APGSSLPTSLTIPNPQETSNVVVTERVI), and 947 to 975 (QPTSGMIGNLSMTPELSSAHNVIVTERVV).

As to quaternary structure, binds to JUP/plakoglobin. Interacts with PKP2. Interacts with DSC3; there is evidence to suggest that the interaction promotes cell-cell adhesion of keratinocytes. In terms of tissue distribution, expressed in testis.

Its subcellular location is the cell membrane. It is found in the cell junction. The protein localises to the desmosome. The protein resides in the cytoplasm. It localises to the nucleus. Component of intercellular desmosome junctions. Involved in the interaction of plaque proteins and intermediate filaments mediating cell-cell adhesion. The protein is Desmoglein-1-alpha (Dsg1a) of Mus musculus (Mouse).